Here is a 288-residue protein sequence, read N- to C-terminus: ATP synthase gamma chain (288 aa).

This sequence belongs to the ATPase gamma chain family. As to quaternary structure, F-type ATPases have 2 components, CF(1) - the catalytic core - and CF(0) - the membrane proton channel. CF(1) has five subunits: alpha(3), beta(3), gamma(1), delta(1), epsilon(1). CF(0) has three main subunits: a, b and c.

It localises to the cell inner membrane. In terms of biological role, produces ATP from ADP in the presence of a proton gradient across the membrane. The gamma chain is believed to be important in regulating ATPase activity and the flow of protons through the CF(0) complex. In Actinobacillus pleuropneumoniae serotype 3 (strain JL03), this protein is ATP synthase gamma chain.